Consider the following 119-residue polypeptide: Large ribosomal subunit protein bL20c (119 aa).

It belongs to the bacterial ribosomal protein bL20 family.

It is found in the plastid. Its subcellular location is the chloroplast. Binds directly to 23S ribosomal RNA and is necessary for the in vitro assembly process of the 50S ribosomal subunit. It is not involved in the protein synthesizing functions of that subunit. The chain is Large ribosomal subunit protein bL20c from Saccharum hybrid (Sugarcane).